Consider the following 420-residue polypeptide: Imidazolonepropionase (420 aa).

Residues His77 and His79 each coordinate Fe(3+). Zn(2+) contacts are provided by His77 and His79. Residues Arg86, Tyr149, and His182 each contribute to the 4-imidazolone-5-propanoate site. Tyr149 contributes to the N-formimidoyl-L-glutamate binding site. His245 lines the Fe(3+) pocket. His245 provides a ligand contact to Zn(2+). Glu248 is a 4-imidazolone-5-propanoate binding site. Asp319 serves as a coordination point for Fe(3+). Residue Asp319 participates in Zn(2+) binding. Asn321 is a binding site for N-formimidoyl-L-glutamate.

This sequence belongs to the metallo-dependent hydrolases superfamily. HutI family. Requires Zn(2+) as cofactor. It depends on Fe(3+) as a cofactor.

It localises to the cytoplasm. It carries out the reaction 4-imidazolone-5-propanoate + H2O = N-formimidoyl-L-glutamate. The protein operates within amino-acid degradation; L-histidine degradation into L-glutamate; N-formimidoyl-L-glutamate from L-histidine: step 3/3. Its function is as follows. Catalyzes the hydrolytic cleavage of the carbon-nitrogen bond in imidazolone-5-propanoate to yield N-formimidoyl-L-glutamate. It is the third step in the universal histidine degradation pathway. The protein is Imidazolonepropionase of Haloarcula marismortui (strain ATCC 43049 / DSM 3752 / JCM 8966 / VKM B-1809) (Halobacterium marismortui).